A 74-amino-acid polypeptide reads, in one-letter code: APVDEKNPQAVALGYVSDAAKADKAKYKQFVAGSHCGNCALFQGKATDAVGGCPLFAGKQVANKGWCSAWAKKA.

4 residues coordinate [4Fe-4S] cluster: Cys-36, Cys-39, Cys-53, and Cys-67.

This sequence belongs to the high-potential iron-sulfur protein (HiPIP) family. As to quaternary structure, homodimer.

Specific class of high-redox-potential 4Fe-4S ferredoxins. Functions in anaerobic electron transport in most purple and in some other photosynthetic bacteria and in at least one genus (Paracoccus) of halophilic, denitrifying bacteria. The chain is High-potential iron-sulfur protein (hip) from Rubrivivax gelatinosus (Rhodocyclus gelatinosus).